A 394-amino-acid chain; its full sequence is Mitogen-activated protein kinase 2 (394 aa).

Polar residues predominate over residues 1–10 (MDGPAQQTDT). A disordered region spans residues 1–27 (MDGPAQQTDTVMAEAAAAQQPAPPSQP). One can recognise a Protein kinase domain in the interval 61–346 (KPPIMPIGKG…VEDALAHPYL (286 aa)). Residues 67–75 (IGKGAYGIV) and Lys-90 contribute to the ATP site. Asp-187 acts as the Proton acceptor in catalysis. Thr-219 is subject to Phosphothreonine. Residues 219–221 (TEY) carry the TXY motif. Phosphotyrosine is present on Tyr-221. Thr-224 is modified (phosphothreonine).

This sequence belongs to the protein kinase superfamily. CMGC Ser/Thr protein kinase family. MAP kinase subfamily. It depends on Mg(2+) as a cofactor. Activated by cold, wounding and UV-C in a cultivar-dependent manner; phosphorylated at Tyr-221 in cv. Subicho but not in cv. Pungchon. Expressed constitutively in roots, stems, flowers and fruits of the hot pepper (cv. Subicho).

The catalysed reaction is L-seryl-[protein] + ATP = O-phospho-L-seryl-[protein] + ADP + H(+). The enzyme catalyses L-threonyl-[protein] + ATP = O-phospho-L-threonyl-[protein] + ADP + H(+). Activated by threonine and tyrosine phosphorylation. Its function is as follows. Protein kinase involved in oxidative stress-mediated and innate immune MAP kinase signaling cascades. The sequence is that of Mitogen-activated protein kinase 2 from Capsicum annuum (Capsicum pepper).